We begin with the raw amino-acid sequence, 210 residues long: MSSAKEIKKSILAPVLDNNPIALQVLGVCSALAVTTKLETAFVMTLAVMFVTAFSNLFVSLIRHHIPNSVRIIVQMAIIASLVIVVDQILRAYLYDISKQLSVFVGLIITNCIVMGRAEAFAMKSAPIPSFIDGIGNGLGYGFVLITVGFFRELLGSGKLFGMEVLPLVKDGGWYQPNGLMLLAPSAFFLIGFMIWAIRTFKPEQLEAKE.

Helical transmembrane passes span 11–31 (ILAP…VCSA), 42–62 (FVMT…VSLI), 70–90 (VRII…DQIL), 103–123 (VFVG…AFAM), 131–151 (FIDG…VGFF), and 178–198 (NGLM…IWAI).

Belongs to the NqrDE/RnfAE family. As to quaternary structure, composed of six subunits; NqrA, NqrB, NqrC, NqrD, NqrE and NqrF.

The protein resides in the cell inner membrane. It carries out the reaction a ubiquinone + n Na(+)(in) + NADH + H(+) = a ubiquinol + n Na(+)(out) + NAD(+). Functionally, NQR complex catalyzes the reduction of ubiquinone-1 to ubiquinol by two successive reactions, coupled with the transport of Na(+) ions from the cytoplasm to the periplasm. NqrA to NqrE are probably involved in the second step, the conversion of ubisemiquinone to ubiquinol. This chain is Na(+)-translocating NADH-quinone reductase subunit D, found in Vibrio anguillarum (Listonella anguillarum).